The following is a 222-amino-acid chain: 7-cyano-7-deazaguanine synthase (222 aa).

9–19 (LSGGLDSATAA) serves as a coordination point for ATP. 4 residues coordinate Zn(2+): Cys190, Cys198, Cys201, and Cys204.

Belongs to the QueC family. Requires Zn(2+) as cofactor.

It carries out the reaction 7-carboxy-7-deazaguanine + NH4(+) + ATP = 7-cyano-7-deazaguanine + ADP + phosphate + H2O + H(+). It functions in the pathway purine metabolism; 7-cyano-7-deazaguanine biosynthesis. Catalyzes the ATP-dependent conversion of 7-carboxy-7-deazaguanine (CDG) to 7-cyano-7-deazaguanine (preQ(0)). The sequence is that of 7-cyano-7-deazaguanine synthase from Synechococcus sp. (strain RCC307).